Here is a 178-residue protein sequence, read N- to C-terminus: Cytochrome b6-f complex iron-sulfur subunit (178 aa).

A helical membrane pass occupies residues 20-42 (LLTFGSVTGVALGALYPVVNYFI). The Rieske domain occupies 71–161 (THPAGDRSLV…VSVENDNVFV (91 aa)). [2Fe-2S] cluster is bound by residues Cys107, His109, Cys125, and His128. Cys112 and Cys127 are oxidised to a cystine.

Belongs to the Rieske iron-sulfur protein family. The 4 large subunits of the cytochrome b6-f complex are cytochrome b6, subunit IV (17 kDa polypeptide, PetD), cytochrome f and the Rieske protein, while the 4 small subunits are PetG, PetL, PetM and PetN. The complex functions as a dimer. Requires [2Fe-2S] cluster as cofactor.

It is found in the cellular thylakoid membrane. It carries out the reaction 2 oxidized [plastocyanin] + a plastoquinol + 2 H(+)(in) = 2 reduced [plastocyanin] + a plastoquinone + 4 H(+)(out). Component of the cytochrome b6-f complex, which mediates electron transfer between photosystem II (PSII) and photosystem I (PSI), cyclic electron flow around PSI, and state transitions. The chain is Cytochrome b6-f complex iron-sulfur subunit from Synechococcus sp. (strain WH7803).